A 314-amino-acid polypeptide reads, in one-letter code: Homoserine O-succinyltransferase (314 aa).

The Acyl-thioester intermediate role is filled by cysteine 142. Residues lysine 163 and serine 192 each coordinate substrate. Histidine 235 serves as the catalytic Proton acceptor. Residue glutamate 237 is part of the active site. Position 249 (arginine 249) interacts with substrate.

Belongs to the MetA family.

It is found in the cytoplasm. It catalyses the reaction L-homoserine + succinyl-CoA = O-succinyl-L-homoserine + CoA. It participates in amino-acid biosynthesis; L-methionine biosynthesis via de novo pathway; O-succinyl-L-homoserine from L-homoserine: step 1/1. Functionally, transfers a succinyl group from succinyl-CoA to L-homoserine, forming succinyl-L-homoserine. In Photobacterium profundum (strain SS9), this protein is Homoserine O-succinyltransferase.